A 159-amino-acid chain; its full sequence is S-ribosylhomocysteine lyase (159 aa).

Fe cation-binding residues include His-53, His-57, and Cys-124.

It belongs to the LuxS family. As to quaternary structure, homodimer. The cofactor is Fe cation.

It carries out the reaction S-(5-deoxy-D-ribos-5-yl)-L-homocysteine = (S)-4,5-dihydroxypentane-2,3-dione + L-homocysteine. Involved in the synthesis of autoinducer 2 (AI-2) which is secreted by bacteria and is used to communicate both the cell density and the metabolic potential of the environment. The regulation of gene expression in response to changes in cell density is called quorum sensing. Catalyzes the transformation of S-ribosylhomocysteine (RHC) to homocysteine (HC) and 4,5-dihydroxy-2,3-pentadione (DPD). This is S-ribosylhomocysteine lyase from Desulfotalea psychrophila (strain LSv54 / DSM 12343).